The chain runs to 456 residues: RuvB-like 1 (456 aa).

70 to 77 (GPPGTGKT) contacts ATP.

This sequence belongs to the RuvB family. Forms homohexameric rings. Can form a dodecamer with ruvbl2 made of two stacked hexameric rings. Is a component of the RNA polymerase II holoenzyme complex. Component of the chromatin-remodeling Ino80 complex. Component of some MLL1/MLL complex.

It is found in the nucleus. Its subcellular location is the dynein axonemal particle. It carries out the reaction ATP + H2O = ADP + phosphate + H(+). In terms of biological role, has single-stranded DNA-stimulated ATPase and ATP-dependent DNA helicase (3' to 5') activity suggesting a role in nuclear processes such as recombination and transcription. Proposed core component of the chromatin remodeling INO80 complex which exhibits DNA- and nucleosome-activated ATPase activity and catalyzes ATP-dependent nucleosome sliding. This is RuvB-like 1 (ruvbl1) from Xenopus laevis (African clawed frog).